The following is a 223-amino-acid chain: Glutathione-specific gamma-glutamylcyclotransferase 1 (223 aa).

Residues 1 to 26 (MKQESASQSTPPPSLSPAPSSAQPSW) form a disordered region. 36–41 (IFGYGS) lines the substrate pocket. Glu-116 serves as the catalytic Proton acceptor.

This sequence belongs to the gamma-glutamylcyclotransferase family. ChaC subfamily. Interacts with NOTCH1 (via extracellular region). In terms of tissue distribution, widely expressed, with high expression in forebrain and anterior spinal cord. Expressed at intermediate level in the dorsal aorta and heart. Present throughout adult brain (at protein level).

It localises to the cytoplasm. Its subcellular location is the cytosol. The protein resides in the golgi apparatus. It is found in the trans-Golgi network. The enzyme catalyses glutathione = L-cysteinylglycine + 5-oxo-L-proline. Its function is as follows. Catalyzes the cleavage of glutathione into 5-oxo-L-proline and a Cys-Gly dipeptide. Acts specifically on glutathione, but not on other gamma-glutamyl peptides. Glutathione depletion is an important factor for apoptosis initiation and execution. Acts as a pro-apoptotic component of the unfolded protein response pathway by mediating the pro-apoptotic effects of the ATF4-ATF3-DDIT3/CHOP cascade. Negative regulator of Notch signaling pathway involved in embryonic neurogenesis: acts by inhibiting Notch cleavage by furin, maintaining Notch in an immature inactive form, thereby promoting neurogenesis in embryos. The chain is Glutathione-specific gamma-glutamylcyclotransferase 1 from Mus musculus (Mouse).